The chain runs to 451 residues: POU domain, class 3, transcription factor 1 (451 aa).

Disordered regions lie at residues 1 to 21 (MATT…GTGP), 69 to 114 (AHPQ…GFHA), 134 to 154 (AHHL…HQPQ), 186 to 253 (GLHH…PSSD), and 395 to 451 (KRMT…GSVQ). Composition is skewed to gly residues over residues 11–20 (GPGGGAGGTG), 76–85 (TGGGGGGDWA), and 95–112 (AGGG…GGGF). A compositionally biased stretch (low complexity) spans 134 to 145 (AHHLGPAMSPSP). Basic and acidic residues predominate over residues 190–199 (ALHEDGHEAQ). The span at 220–232 (AGGLHAAAAHLHP) shows a compositional bias: low complexity. Residues 247–321 (EDAPSSDDLE…LLNKWLEETD (75 aa)) enclose the POU-specific domain. Positions 339–398 (KRKKRTSIEVGVKGALESHFLKCPKPSAHEITGLADSLQLEKEVVRVWFCNRRQKEKRMT) form a DNA-binding region, homeobox. Over residues 427–436 (PSAPPPPPPA) the composition is skewed to pro residues.

The protein belongs to the POU transcription factor family. Class-3 subfamily. In terms of tissue distribution, neural tissues and testis.

The protein resides in the nucleus. Functionally, transcription factor that binds to the octamer motif (5'-ATTTGCAT-3'). Acts as a transcriptional activator when binding cooperatively with SOX4, SOX11, or SOX12 to gene promoters. Acts as a transcriptional repressor of myelin-specific genes. The polypeptide is POU domain, class 3, transcription factor 1 (Pou3f1) (Rattus norvegicus (Rat)).